Consider the following 276-residue polypeptide: C-type lectin domain family 12 member B (276 aa).

The Cytoplasmic segment spans residues 1-43 (MSEDMTYATLTFQDSVAAGNNQDRNNLRKRGYPAPSSIWRQAA). The ITIM motif signature appears at 5-10 (MTYATL). The residue at position 7 (Tyr-7) is a Phosphotyrosine. The helical; Signal-anchor for type II membrane protein transmembrane segment at 44-64 (LGLLTLCVMLLIGLVTLGIMF) threads the bilayer. The Extracellular portion of the chain corresponds to 65–276 (LQMSSEINSD…AALVKIEDLD (212 aa)). N-linked (GlcNAc...) asparagine glycosylation is found at Asn-91, Asn-176, and Asn-237. The C-type lectin domain occupies 150 to 264 (YQTSCYYFAV…CSAEISWICE (115 aa)). 2 disulfide bridges follow: Cys-172/Cys-263 and Cys-242/Cys-255.

In terms of assembly, homodimer. Interacts (via ITIM motif) with PTPN6. Interacts (via ITIM motif) with PTPN11; this interaction triggers dephosphorylation and activation of PTPN11.

It is found in the cell membrane. Functionally, inhibitory receptor postulated to negatively regulate immune and non-immune functions. Upon phosphorylation, recruits SH2 domain-containing PTPN6 and PTPN11 phosphatases to its ITIM motif and antagonizes activation signals. Although it inhibits KLRK1/NKG2D-mediated signaling, it does not bind known ligands of KLRK1/NKG2D and therefore is not its inhibitory counterpart. May limit activation of myeloid cell subsets in response to infection or tissue inflammation. May protect target cells against natural killer cell-mediated lysis. May negatively regulate cell cycle and differentiation of melanocytes via inactivation of STAT3. The chain is C-type lectin domain family 12 member B (CLEC12B) from Bos taurus (Bovine).